We begin with the raw amino-acid sequence, 425 residues long: Putative E3 ubiquitin-protein ligase UBR7 (425 aa).

Residues 44-116 (EKCSYSQGSV…KNLECKLLPD (73 aa)) form a UBR-type zinc finger. The PHD-type; atypical zinc finger occupies 132–188 (GLYCICKRPYPDPEDEIPDEMIQCVVCEDWFHGRHLGAIPPESGDFQEMVCQACMKR). Glycyl lysine isopeptide (Lys-Gly) (interchain with G-Cter in SUMO2) cross-links involve residues lysine 225 and lysine 252. The disordered stretch occupies residues 225–246 (KPENGEHQDSTLKEDVPEQGKD). Serine 264 carries the phosphoserine modification. Lysine 274 participates in a covalent cross-link: Glycyl lysine isopeptide (Lys-Gly) (interchain with G-Cter in SUMO2). Residue serine 354 is modified to Phosphoserine. Residue lysine 398 forms a Glycyl lysine isopeptide (Lys-Gly) (interchain with G-Cter in SUMO2) linkage.

As to expression, expressed in sperm (at protein level).

The catalysed reaction is S-ubiquitinyl-[E2 ubiquitin-conjugating enzyme]-L-cysteine + [acceptor protein]-L-lysine = [E2 ubiquitin-conjugating enzyme]-L-cysteine + N(6)-ubiquitinyl-[acceptor protein]-L-lysine.. The protein operates within protein modification; protein ubiquitination. Functionally, E3 ubiquitin-protein ligase which is a component of the N-end rule pathway. Recognizes and binds to proteins bearing specific N-terminal residues that are destabilizing according to the N-end rule, leading to their ubiquitination and subsequent degradation. The chain is Putative E3 ubiquitin-protein ligase UBR7 (UBR7) from Homo sapiens (Human).